Here is a 394-residue protein sequence, read N- to C-terminus: Flagellin A (394 aa).

This sequence belongs to the bacterial flagellin family.

It is found in the secreted. The protein resides in the bacterial flagellum. Its function is as follows. Flagellin is the subunit protein which polymerizes to form the filaments of bacterial flagella. Homomer of FlaA is able to form a functional filament. The sequence is that of Flagellin A (flaA) from Rhizobium meliloti (strain 1021) (Ensifer meliloti).